Reading from the N-terminus, the 280-residue chain is 4-diphosphocytidyl-2-C-methyl-D-erythritol kinase (280 aa).

Residue lysine 8 is part of the active site. 91 to 101 (PVSAGLAGGST) is a binding site for ATP. Aspartate 133 is an active-site residue.

The protein belongs to the GHMP kinase family. IspE subfamily.

It catalyses the reaction 4-CDP-2-C-methyl-D-erythritol + ATP = 4-CDP-2-C-methyl-D-erythritol 2-phosphate + ADP + H(+). Its pathway is isoprenoid biosynthesis; isopentenyl diphosphate biosynthesis via DXP pathway; isopentenyl diphosphate from 1-deoxy-D-xylulose 5-phosphate: step 3/6. Catalyzes the phosphorylation of the position 2 hydroxy group of 4-diphosphocytidyl-2C-methyl-D-erythritol. This chain is 4-diphosphocytidyl-2-C-methyl-D-erythritol kinase, found in Clostridium beijerinckii (strain ATCC 51743 / NCIMB 8052) (Clostridium acetobutylicum).